A 284-amino-acid polypeptide reads, in one-letter code: Probable endonuclease 4 (284 aa).

His69, His109, Glu145, Asp179, His182, His216, Asp229, His231, and Glu261 together coordinate Zn(2+).

This sequence belongs to the AP endonuclease 2 family. Zn(2+) serves as cofactor.

The catalysed reaction is Endonucleolytic cleavage to 5'-phosphooligonucleotide end-products.. Its function is as follows. Endonuclease IV plays a role in DNA repair. It cleaves phosphodiester bonds at apurinic or apyrimidinic (AP) sites, generating a 3'-hydroxyl group and a 5'-terminal sugar phosphate. This is Probable endonuclease 4 from Klebsiella pneumoniae (strain 342).